The primary structure comprises 78 residues: Cytochrome c oxidase subunit 6b-3 (78 aa).

The CHCH domain maps to 22–65 (TRHCFTRYIEFHRCTTAKGEDANECERFAKYYRALCPGEWVDKW). Positions 25-35 (CFTRYIEFHRC) match the Cx9C motif motif. Disulfide bonds link Cys25-Cys57 and Cys35-Cys46. The Cx10C motif signature appears at 46–57 (CERFAKYYRALC).

Belongs to the cytochrome c oxidase subunit 6B (TC 3.D.4.8) family. As to expression, expressed in the whole plant.

It is found in the mitochondrion. Its function is as follows. This protein is one of the nuclear-coded polypeptide chains of cytochrome c oxidase, the terminal oxidase in mitochondrial electron transport. This protein may be one of the heme-binding subunits of the oxidase. This is Cytochrome c oxidase subunit 6b-3 (COX6B-3) from Arabidopsis thaliana (Mouse-ear cress).